Here is a 570-residue protein sequence, read N- to C-terminus: Interleukin-1 receptor accessory protein (570 aa).

Residues 1 to 20 (MTLLWCVVSLYFYGILQSDA) form the signal peptide. 3 Ig-like C2-type domains span residues 21–128 (SERC…VAFP), 136–226 (SCFN…FHLT), and 242–350 (PPVI…VKQK). Over 21-367 (SERCDDWGLD…VELACGFGAT (347 aa)) the chain is Extracellular. Disulfide bonds link Cys-24-Cys-122, Cys-47-Cys-114, Cys-137-Cys-181, Cys-160-Cys-212, and Cys-266-Cys-332. Asn-57 is a glycosylation site (N-linked (GlcNAc...) asparagine). Residues 69-85 (IWYWTRQDRDLEEPINF) form an essential for interaction with PTPRD region. N-linked (GlcNAc...) asparagine glycosylation is found at Asn-107, Asn-111, and Asn-118. N-linked (GlcNAc...) asparagine glycans are attached at residues Asn-196, Asn-209, and Asn-299. A helical transmembrane segment spans residues 368 to 388 (VLLVVILIVVYHVYWLEMVLF). The Cytoplasmic segment spans residues 389–570 (YRAHFGTDET…GLSYSSLKNV (182 aa)). The TIR domain maps to 403-546 (KEYDIYVSYA…RFWKQLQVAM (144 aa)). Residue Glu-482 is part of the active site. Residues 549–570 (KKSPRRSSSDEQGLSYSSLKNV) are disordered. Ser-557 bears the Phosphoserine mark. The span at 558–570 (DEQGLSYSSLKNV) shows a compositional bias: polar residues.

This sequence belongs to the interleukin-1 receptor family. The interleukin-36 receptor complex is a heterodimer of IL1RL2 and IL1RAP; the association is inhibited by IL36RN. The interleukin-1 receptor complex is a heterodimer of IL1R1 and IL1RAP. Associates with IL1R2 to form a non-signaling interleukin-1 receptor complex. Interacts with IL-33-bound IL1RL1 to form the minimal interleukin-33 signaling complex with a 1:1:1 stoichiometry. Interacts with KIT (independently of stimulation with KITLG/SCF). A mast cell-specific KITLG/SCF-induced interleukin-33 signaling complex contains IL1RL1, IL1RAP, KIT and MYD88. Interacts (via the first immunoglobilin domain) with PTPRD (via the third immunoglobilin domain); induces pre- and postsynaptic differentiation of neurons.

It localises to the cell membrane. The protein resides in the secreted. It catalyses the reaction NAD(+) + H2O = ADP-D-ribose + nicotinamide + H(+). Its function is as follows. Coreceptor for IL1RL2 in the IL-36 signaling system. Coreceptor with IL1R1 in the IL-1 signaling system. Associates with IL1R1 bound to IL1B to form the high affinity interleukin-1 receptor complex which mediates interleukin-1-dependent activation of NF-kappa-B and other pathways. Signaling involves the recruitment of adapter molecules such as TOLLIP, MYD88, and IRAK1 or IRAK2 via the respective TIR domains of the receptor/coreceptor subunits. Recruits TOLLIP to the signaling complex. Does not bind to interleukin-1 alone; binding of IL1RN to IL1R1, prevents its association with IL1R1 to form a signaling complex. The cellular response is modulated through a non-signaling association with the membrane IL1R2 decoy receptor. Coreceptor for IL1RL1 in the IL-33 signaling system. Can bidirectionally induce pre- and postsynaptic differentiation of neurons by trans-synaptically binding to PTPRD. May play a role in IL1B-mediated costimulation of IFNG production from T-helper 1 (Th1) cells. Associates with secreted ligand-bound IL1R2 and increases the affinity of secreted IL1R2 for IL1B; this complex formation may be the dominant mechanism for neutralization of IL1B by secreted/soluble receptors. Enhances the ability of secreted IL1R1 to inhibit IL-33 signaling. The polypeptide is Interleukin-1 receptor accessory protein (IL1RAP) (Macaca mulatta (Rhesus macaque)).